Here is a 466-residue protein sequence, read N- to C-terminus: Dihydrolipoyl dehydrogenase 3 (466 aa).

FAD is bound by residues 33 to 42 (EGRSTLGGTC), Lys-51, and Gly-115. A disulfide bridge links Cys-42 with Cys-47. NAD(+) contacts are provided by residues 181–185 (GAGVI), Glu-204, Val-238, and 271–274 (AIGR). Residues Asp-313 and Ala-321 each coordinate FAD. His-445 functions as the Proton acceptor in the catalytic mechanism.

The protein belongs to the class-I pyridine nucleotide-disulfide oxidoreductase family. In terms of assembly, homodimer. The cofactor is FAD.

It localises to the cytoplasm. It catalyses the reaction N(6)-[(R)-dihydrolipoyl]-L-lysyl-[protein] + NAD(+) = N(6)-[(R)-lipoyl]-L-lysyl-[protein] + NADH + H(+). In terms of biological role, LPD-3 may substitute for lipoamide dehydrogenase of the 2-oxoglutarate dehydrogenase and pyruvate multienzyme complexes when the latter is inactive or missing. This is Dihydrolipoyl dehydrogenase 3 (lpd3) from Pseudomonas putida (Arthrobacter siderocapsulatus).